Reading from the N-terminus, the 489-residue chain is Cobyric acid synthase (489 aa).

One can recognise a GATase cobBQ-type domain in the interval 251–444 (GLIIAVIRLP…LHGIFANDTF (194 aa)). Cys329 (nucleophile) is an active-site residue. His436 is a catalytic residue.

It belongs to the CobB/CobQ family. CobQ subfamily.

Its pathway is cofactor biosynthesis; adenosylcobalamin biosynthesis. Functionally, catalyzes amidations at positions B, D, E, and G on adenosylcobyrinic A,C-diamide. NH(2) groups are provided by glutamine, and one molecule of ATP is hydrogenolyzed for each amidation. The chain is Cobyric acid synthase from Chloroflexus aurantiacus (strain ATCC 29366 / DSM 635 / J-10-fl).